A 56-amino-acid polypeptide reads, in one-letter code: uncharacterized protein (56 aa).

4Fe-4S ferredoxin-type domains lie at valine 2–glutamate 28 and histidine 29–glutamate 56. [4Fe-4S] cluster contacts are provided by cysteine 9, cysteine 12, cysteine 15, cysteine 19, cysteine 38, cysteine 41, cysteine 44, and cysteine 48.

[4Fe-4S] cluster serves as cofactor.

Ferredoxins are iron-sulfur proteins that transfer electrons in a wide variety of metabolic reactions. This is an uncharacterized protein from Methanocaldococcus jannaschii (strain ATCC 43067 / DSM 2661 / JAL-1 / JCM 10045 / NBRC 100440) (Methanococcus jannaschii).